A 349-amino-acid polypeptide reads, in one-letter code: tRNA N6-adenosine threonylcarbamoyltransferase (349 aa).

Positions 111 and 115 each coordinate Fe cation. Substrate is bound by residues 134–138, Asp167, Gly180, Asp184, and Asn279; that span reads LVSGG. Position 307 (Asp307) interacts with Fe cation.

This sequence belongs to the KAE1 / TsaD family. Fe(2+) is required as a cofactor.

The protein localises to the cytoplasm. It catalyses the reaction L-threonylcarbamoyladenylate + adenosine(37) in tRNA = N(6)-L-threonylcarbamoyladenosine(37) in tRNA + AMP + H(+). Its function is as follows. Required for the formation of a threonylcarbamoyl group on adenosine at position 37 (t(6)A37) in tRNAs that read codons beginning with adenine. Is involved in the transfer of the threonylcarbamoyl moiety of threonylcarbamoyl-AMP (TC-AMP) to the N6 group of A37, together with TsaE and TsaB. TsaD likely plays a direct catalytic role in this reaction. This is tRNA N6-adenosine threonylcarbamoyltransferase from Nostoc punctiforme (strain ATCC 29133 / PCC 73102).